A 471-amino-acid polypeptide reads, in one-letter code: 8-amino-7-oxononanoate synthase (471 aa).

Residue arginine 40 participates in substrate binding. Pyridoxal 5'-phosphate is bound at residue 131–132 (GY). Position 156 (histidine 156) interacts with substrate. 3 residues coordinate pyridoxal 5'-phosphate: serine 202, histidine 230, and threonine 258. Lysine 261 bears the N6-(pyridoxal phosphate)lysine mark. Substrate is bound at residue threonine 377. The tract at residues 409 to 471 (SEGQTRREAE…LGAARRETAA (63 aa)) is disordered.

The protein belongs to the class-II pyridoxal-phosphate-dependent aminotransferase family. BioF subfamily. Homodimer. The cofactor is pyridoxal 5'-phosphate.

The catalysed reaction is 6-carboxyhexanoyl-[ACP] + L-alanine + H(+) = (8S)-8-amino-7-oxononanoate + holo-[ACP] + CO2. The protein operates within cofactor biosynthesis; biotin biosynthesis. In terms of biological role, catalyzes the decarboxylative condensation of pimeloyl-[acyl-carrier protein] and L-alanine to produce 8-amino-7-oxononanoate (AON), [acyl-carrier protein], and carbon dioxide. This chain is 8-amino-7-oxononanoate synthase, found in Burkholderia ambifaria (strain ATCC BAA-244 / DSM 16087 / CCUG 44356 / LMG 19182 / AMMD) (Burkholderia cepacia (strain AMMD)).